A 196-amino-acid chain; its full sequence is Transmembrane protein 126A (196 aa).

Residues 1-34 lie on the Mitochondrial matrix side of the membrane; sequence MESHKPSTNKDDLIFNIIPRKIKQLPESDRNLLE. The helical transmembrane segment at 35 to 55 threads the bilayer; it reads YGSAYIGLNAAFGGLIANSLF. Residues 56-57 lie on the Mitochondrial intermembrane side of the membrane; sequence RR. A helical membrane pass occupies residues 58 to 78; sequence ILNVTQARVASSLPMAVIPFL. Over 79 to 106 the chain is Mitochondrial matrix; the sequence is TANLSYHSFVSLPLSTGNLNCEICTTTR. Residues 107 to 127 traverse the membrane as a helical segment; it reads GTLVGFVLGGLYPILLAIPVN. Residues 128-159 are Mitochondrial intermembrane-facing; it reads GGLAARYESSPLPQRGNIFNYWITISKPVFRK. A helical membrane pass occupies residues 160-176; sequence MLFPTLLQTAFAAYLGS. At 177–196 the chain is on the mitochondrial matrix side; it reads RQYKLLIKALQLPEPDLEIQ.

This sequence belongs to the TMEM126 family. Interacts with OXA1L; promoting cotranslational quality control in mitochondria.

Its subcellular location is the mitochondrion inner membrane. Functionally, protein required for the cotranslational protein quality control in the inner membrane of the mitochondria. Associates with newly synthesized polypeptides and may act as a chaperone that cooperates with OXA1L for the insertion of newly synthesized mitochondrial proteins into the inner membrane. Required for the assembly of the ND4 module of mitochondrial complex I. The chain is Transmembrane protein 126A (Tmem126a) from Rattus norvegicus (Rat).